The chain runs to 240 residues: Ribonuclease HII (240 aa).

The 200-residue stretch at 27 to 226 (GPVAGVDEAG…REARSLRLED (200 aa)) folds into the RNase H type-2 domain. A divalent metal cation is bound by residues Asp-33, Glu-34, and Asp-127.

This sequence belongs to the RNase HII family. Mn(2+) serves as cofactor. Mg(2+) is required as a cofactor.

It localises to the cytoplasm. The catalysed reaction is Endonucleolytic cleavage to 5'-phosphomonoester.. Endonuclease that specifically degrades the RNA of RNA-DNA hybrids. This chain is Ribonuclease HII, found in Frankia casuarinae (strain DSM 45818 / CECT 9043 / HFP020203 / CcI3).